The primary structure comprises 84 residues: Small ribosomal subunit protein uS17 (84 aa).

Belongs to the universal ribosomal protein uS17 family. Part of the 30S ribosomal subunit.

In terms of biological role, one of the primary rRNA binding proteins, it binds specifically to the 5'-end of 16S ribosomal RNA. The polypeptide is Small ribosomal subunit protein uS17 (Ureaplasma parvum serovar 3 (strain ATCC 27815 / 27 / NCTC 11736)).